Reading from the N-terminus, the 246-residue chain is Exosome complex component Rrp41 (246 aa).

Belongs to the RNase PH family. Rrp41 subfamily. In terms of assembly, component of the archaeal exosome complex. Forms a hexameric ring-like arrangement composed of 3 Rrp41-Rrp42 heterodimers. The hexameric ring associates with a trimer of Rrp4 and/or Csl4 subunits.

It localises to the cytoplasm. Functionally, catalytic component of the exosome, which is a complex involved in RNA degradation. Has 3'-&gt;5' exoribonuclease activity. Can also synthesize heteromeric RNA-tails. This is Exosome complex component Rrp41 from Aeropyrum pernix (strain ATCC 700893 / DSM 11879 / JCM 9820 / NBRC 100138 / K1).